Consider the following 63-residue polypeptide: Large ribosomal subunit protein uL29 (63 aa).

The protein belongs to the universal ribosomal protein uL29 family.

This chain is Large ribosomal subunit protein uL29, found in Colwellia psychrerythraea (strain 34H / ATCC BAA-681) (Vibrio psychroerythus).